The following is a 148-amino-acid chain: uncharacterized protein (148 aa).

Positions Met-1–Ala-20 are cleaved as a signal peptide.

This is an uncharacterized protein from Haemophilus influenzae (strain ATCC 51907 / DSM 11121 / KW20 / Rd).